The primary structure comprises 211 residues: Arginine exporter protein ArgO (211 aa).

The next 6 helical transmembrane spans lie at 1-21 (MISY…PLGP), 37-57 (LMIA…GIFG), 68-88 (LLAL…FGAL), 111-131 (IIAT…DTFV), 147-167 (WFAL…ALLA), and 179-199 (AQRI…FQLA).

The protein belongs to the LysE/ArgO transporter (TC 2.A.75) family.

It localises to the cell inner membrane. It carries out the reaction L-arginine(in) = L-arginine(out). In terms of biological role, involved in the export of arginine. Important to control the intracellular level of arginine and the correct balance between arginine and lysine. This Salmonella typhimurium (strain LT2 / SGSC1412 / ATCC 700720) protein is Arginine exporter protein ArgO.